The primary structure comprises 571 residues: Glutamate--tRNA ligase (571 aa).

The 'HIGH' region signature appears at 38 to 48 (PSPTGFMHIGG). The 'KMSKS' region motif lies at 316-320 (KLSKR). Lysine 319 contributes to the ATP binding site.

The protein belongs to the class-I aminoacyl-tRNA synthetase family. Glutamate--tRNA ligase type 1 subfamily. Monomer.

It localises to the cytoplasm. It carries out the reaction tRNA(Glu) + L-glutamate + ATP = L-glutamyl-tRNA(Glu) + AMP + diphosphate. In terms of biological role, catalyzes the attachment of glutamate to tRNA(Glu) in a two-step reaction: glutamate is first activated by ATP to form Glu-AMP and then transferred to the acceptor end of tRNA(Glu). The chain is Glutamate--tRNA ligase from Sorangium cellulosum (strain So ce56) (Polyangium cellulosum (strain So ce56)).